A 219-amino-acid polypeptide reads, in one-letter code: Large ribosomal subunit protein uL4 (219 aa).

The disordered stretch occupies residues 43–100 (AAKRQGTHSTKTRGEVSGGGKKPYRQKGTGRARQGSTRAPQFTGGGTVHGPQPRDYSQ).

Belongs to the universal ribosomal protein uL4 family. Part of the 50S ribosomal subunit.

In terms of biological role, one of the primary rRNA binding proteins, this protein initially binds near the 5'-end of the 23S rRNA. It is important during the early stages of 50S assembly. It makes multiple contacts with different domains of the 23S rRNA in the assembled 50S subunit and ribosome. Functionally, forms part of the polypeptide exit tunnel. This is Large ribosomal subunit protein uL4 from Mycobacterium sp. (strain JLS).